Here is a 233-residue protein sequence, read N- to C-terminus: Biosynthetic peptidoglycan transglycosylase (233 aa).

A helical membrane pass occupies residues 8 to 28 (LIALPVGIFIFFNAYVYGNII).

It belongs to the glycosyltransferase 51 family.

Its subcellular location is the cell inner membrane. The enzyme catalyses [GlcNAc-(1-&gt;4)-Mur2Ac(oyl-L-Ala-gamma-D-Glu-L-Lys-D-Ala-D-Ala)](n)-di-trans,octa-cis-undecaprenyl diphosphate + beta-D-GlcNAc-(1-&gt;4)-Mur2Ac(oyl-L-Ala-gamma-D-Glu-L-Lys-D-Ala-D-Ala)-di-trans,octa-cis-undecaprenyl diphosphate = [GlcNAc-(1-&gt;4)-Mur2Ac(oyl-L-Ala-gamma-D-Glu-L-Lys-D-Ala-D-Ala)](n+1)-di-trans,octa-cis-undecaprenyl diphosphate + di-trans,octa-cis-undecaprenyl diphosphate + H(+). It participates in cell wall biogenesis; peptidoglycan biosynthesis. Functionally, peptidoglycan polymerase that catalyzes glycan chain elongation from lipid-linked precursors. The sequence is that of Biosynthetic peptidoglycan transglycosylase from Neisseria meningitidis serogroup A / serotype 4A (strain DSM 15465 / Z2491).